Consider the following 298-residue polypeptide: Inosose dehydratase (298 aa).

Belongs to the IolE/MocC family. The cofactor is glutathione. Requires Co(2+) as cofactor. Mn(2+) serves as cofactor.

The catalysed reaction is scyllo-inosose = 3D-3,5/4-trihydroxycyclohexane-1,2-dione + H2O. The protein operates within polyol metabolism; myo-inositol degradation into acetyl-CoA; acetyl-CoA from myo-inositol: step 2/7. Functionally, catalyzes the dehydration of inosose (2-keto-myo-inositol, 2KMI or 2,4,6/3,5-pentahydroxycyclohexanone) to 3D-(3,5/4)-trihydroxycyclohexane-1,2-dione (D-2,3-diketo-4-deoxy-epi-inositol). This is Inosose dehydratase from Bacillus cereus (strain AH820).